The primary structure comprises 408 residues: G patch domain-containing protein 4 (408 aa).

Position 1 is an N-acetylmethionine (M1). T4 is subject to Phosphothreonine. The region spanning G11–A57 is the G-patch domain. K46 is covalently cross-linked (Glycyl lysine isopeptide (Lys-Gly) (interchain with G-Cter in SUMO2)). Position 116 is a phosphothreonine (T116). Disordered regions lie at residues T116–N141 and G187–D408. Residues S128 and S130 each carry the phosphoserine modification. Composition is skewed to basic and acidic residues over residues R222–R236, H245–T257, and L274–S283. A compositionally biased stretch (acidic residues) spans E340–L354. The span at G358–R372 shows a compositional bias: basic and acidic residues. The span at K398–D408 shows a compositional bias: basic residues.

The sequence is that of G patch domain-containing protein 4 (GPATCH4) from Bos taurus (Bovine).